We begin with the raw amino-acid sequence, 146 residues long: Ribonuclease P protein component (146 aa).

It belongs to the RnpA family. Consists of a catalytic RNA component (M1 or rnpB) and a protein subunit.

The catalysed reaction is Endonucleolytic cleavage of RNA, removing 5'-extranucleotides from tRNA precursor.. Functionally, RNaseP catalyzes the removal of the 5'-leader sequence from pre-tRNA to produce the mature 5'-terminus. It can also cleave other RNA substrates such as 4.5S RNA. The protein component plays an auxiliary but essential role in vivo by binding to the 5'-leader sequence and broadening the substrate specificity of the ribozyme. The polypeptide is Ribonuclease P protein component (Chlorobium phaeobacteroides (strain DSM 266 / SMG 266 / 2430)).